Reading from the N-terminus, the 429-residue chain is Stromal membrane-associated protein 2 (429 aa).

In terms of domain architecture, Arf-GAP spans 13–137; it reads QAVLANLLLE…LDINAFRKEK (125 aa). The C4-type zinc-finger motif lies at 28 to 51; it reads CADCQSKGPRWASWNIGVFICIRC. The residue at position 127 (serine 127) is a Phosphoserine. The segment covering 138–172 has biased composition (basic and acidic residues); it reads DNKWKRGSEPAPEKKMEPVVFEKVKMPQKKEDPQL. 2 disordered regions span residues 138–181 and 217–263; these read DNKW…PKSK and VSSP…KKQL. The tract at residues 163-232 is interaction with clathrin heavy chains; sequence MPQKKEDPQL…SVSRKVVGSM (70 aa). Positions 217–231 are enriched in low complexity; the sequence is VSSPSSSVSRKVVGS. 5 positions are modified to phosphoserine: serine 219, serine 223, serine 225, serine 231, and serine 240. The span at 253 to 263 shows a compositional bias: basic and acidic residues; it reads SKSEETSKKQL. Residues 340–429 form an interaction with PICALM region; it reads MGGMQASMMG…NQTLSPQMWK (90 aa).

In terms of assembly, interacts with ARF1. Interacts with PICALM and clathrin heavy chains.

It is found in the cytoplasm. Functionally, GTPase activating protein that acts on ARF1. Can also activate ARF6 (in vitro). May play a role in clathrin-dependent retrograde transport from early endosomes to the trans-Golgi network. In Bos taurus (Bovine), this protein is Stromal membrane-associated protein 2 (SMAP2).